The following is a 48-amino-acid chain: MKVVSSIGSLKNRSKDCQVVKRRGRLYVICKSDPRLKVRQGGAKMKRK.

It belongs to the bacterial ribosomal protein bL36 family.

It localises to the plastid. The protein resides in the chloroplast. In Rhodomonas salina (Cryptomonas salina), this protein is Large ribosomal subunit protein bL36c.